The primary structure comprises 185 residues: Ribosome-recycling factor (185 aa).

The protein belongs to the RRF family.

The protein resides in the cytoplasm. Its function is as follows. Responsible for the release of ribosomes from messenger RNA at the termination of protein biosynthesis. May increase the efficiency of translation by recycling ribosomes from one round of translation to another. In Pseudomonas aeruginosa (strain LESB58), this protein is Ribosome-recycling factor.